The sequence spans 159 residues: 6,7-dimethyl-8-ribityllumazine synthase (159 aa).

Residues Trp26, 58 to 60, and 80 to 82 each bind 5-amino-6-(D-ribitylamino)uracil; these read AIE and VVI. 85–86 contributes to the (2S)-2-hydroxy-3-oxobutyl phosphate binding site; that stretch reads ET. Residue His88 is the Proton donor of the active site. Asn113 is a 5-amino-6-(D-ribitylamino)uracil binding site. Arg127 is a (2S)-2-hydroxy-3-oxobutyl phosphate binding site.

Belongs to the DMRL synthase family. In terms of assembly, homopentamer.

The catalysed reaction is (2S)-2-hydroxy-3-oxobutyl phosphate + 5-amino-6-(D-ribitylamino)uracil = 6,7-dimethyl-8-(1-D-ribityl)lumazine + phosphate + 2 H2O + H(+). It participates in cofactor biosynthesis; riboflavin biosynthesis; riboflavin from 2-hydroxy-3-oxobutyl phosphate and 5-amino-6-(D-ribitylamino)uracil: step 1/2. Functionally, catalyzes the formation of 6,7-dimethyl-8-ribityllumazine by condensation of 5-amino-6-(D-ribitylamino)uracil with 3,4-dihydroxy-2-butanone 4-phosphate. This is the penultimate step in the biosynthesis of riboflavin. In Mycolicibacterium gilvum (strain PYR-GCK) (Mycobacterium gilvum (strain PYR-GCK)), this protein is 6,7-dimethyl-8-ribityllumazine synthase.